A 2514-amino-acid chain; its full sequence is Probable polyketide synthase 8/35 (2514 aa).

A Ketosynthase family 3 (KS3) domain is found at 11–442 (DKGVAIVGVG…GSNCCLLISE (432 aa)). Catalysis depends on for beta-ketoacyl synthase activity residues C181, H323, and H362. Residues 635-668 (GVNPSFILGHSLGEISAAYCSGMIDLDTFCYTVY) form an acyl/malonyl transferase region. S645 serves as the catalytic For acyl/malonyl transferase activity. The N-terminal hotdog fold stretch occupies residues 925–1047 (IDHLGLSNSY…ANFQLLDHGN (123 aa)). The PKS/mFAS DH domain occupies 925–1209 (IDHLGLSNSY…FKSLIPIKHS (285 aa)). Catalysis depends on H959, which acts as the Proton acceptor; for dehydratase activity. The interval 1064–1209 (NLSKLTKNEL…FKSLIPIKHS (146 aa)) is C-terminal hotdog fold. D1122 serves as the catalytic Proton donor; for dehydratase activity. In terms of domain architecture, Carrier spans 2431–2508 (IGNKNIDELF…ISIKMILNSL (78 aa)). S2468 carries the O-(pantetheine 4'-phosphoryl)serine modification.

The cofactor is pantetheine 4'-phosphate.

Probable polyketide synthase. This chain is Probable polyketide synthase 8/35 (pks8), found in Dictyostelium discoideum (Social amoeba).